The following is a 146-amino-acid chain: Cystatin-C (146 aa).

The first 26 residues, 1–26 (MAGPLRAPLLLLAILAVALAVSPAAG), serve as a signal peptide directing secretion. S43 bears the Phosphoserine mark. The Secondary area of contact motif lies at 81–85 (QIVAG). 2 disulfide bridges follow: C99–C109 and C123–C143.

It belongs to the cystatin family.

The protein resides in the secreted. Its function is as follows. As an inhibitor of cysteine proteinases, this protein is thought to serve an important physiological role as a local regulator of this enzyme activity. In Macaca mulatta (Rhesus macaque), this protein is Cystatin-C (CST3).